We begin with the raw amino-acid sequence, 314 residues long: Methionyl-tRNA formyltransferase (314 aa).

112–115 (SLLP) contributes to the (6S)-5,6,7,8-tetrahydrofolate binding site.

It belongs to the Fmt family.

It catalyses the reaction L-methionyl-tRNA(fMet) + (6R)-10-formyltetrahydrofolate = N-formyl-L-methionyl-tRNA(fMet) + (6S)-5,6,7,8-tetrahydrofolate + H(+). Attaches a formyl group to the free amino group of methionyl-tRNA(fMet). The formyl group appears to play a dual role in the initiator identity of N-formylmethionyl-tRNA by promoting its recognition by IF2 and preventing the misappropriation of this tRNA by the elongation apparatus. The protein is Methionyl-tRNA formyltransferase of Tolumonas auensis (strain DSM 9187 / NBRC 110442 / TA 4).